The primary structure comprises 167 residues: Ubiquitin-fold modifier-conjugating enzyme 1 (167 aa).

The active-site Glycyl thioester intermediate is cysteine 116. Lysine 122 participates in a covalent cross-link: Glycyl lysine isopeptide (Lys-Gly) (interchain with G-Cter in UFM1).

It belongs to the ubiquitin-conjugating enzyme family. UFC1 subfamily. As to quaternary structure, interacts with UBA5 (via C-terminus). Interacts with UFL1. Interacts with UFM1. Interacts with KIRREL3. Ufmylated at Lys-122. Deufmylated by UFSP1.

E2-like enzyme which specifically catalyzes the second step in ufmylation. Accepts the ubiquitin-like modifier UFM1 from the E1 enzyme UBA5 and forms an intermediate with UFM1 via a thioester linkage. Ufmylation is involved in various processes, such as ribosome recycling, response to DNA damage, interferon response or reticulophagy (also called ER-phagy). The chain is Ubiquitin-fold modifier-conjugating enzyme 1 from Bos taurus (Bovine).